The chain runs to 156 residues: Arginine repressor (156 aa).

The protein belongs to the ArgR family.

The protein localises to the cytoplasm. The protein operates within amino-acid biosynthesis; L-arginine biosynthesis [regulation]. Functionally, regulates arginine biosynthesis genes. This is Arginine repressor from Photorhabdus laumondii subsp. laumondii (strain DSM 15139 / CIP 105565 / TT01) (Photorhabdus luminescens subsp. laumondii).